The primary structure comprises 479 residues: Sucrose-6-phosphate hydrolase (479 aa).

The interval 1–28 (MTAHDQELRRRAYEEVEKKEPIANSDPH) is disordered. Residues 40 to 43 (LLND), glutamine 59, 102 to 103 (YS), 161 to 162 (RD), and glutamate 220 contribute to the substrate site. Aspartate 43 is an active-site residue.

Belongs to the glycosyl hydrolase 32 family.

The catalysed reaction is Hydrolysis of terminal non-reducing beta-D-fructofuranoside residues in beta-D-fructofuranosides.. It functions in the pathway glycan biosynthesis; sucrose metabolism. The protein is Sucrose-6-phosphate hydrolase (sacA) of Bacillus subtilis (strain 168).